We begin with the raw amino-acid sequence, 4008 residues long: Extracellular matrix organizing protein FRAS1 (4008 aa).

The signal sequence occupies residues 1–26 (MGVLKVWLGLALALAEFAVLPHHSEG). VWFC domains lie at 27–88 (ACVY…PECV), 93–153 (GSCH…PVCV), 157–217 (KPCS…PQCS), 219–279 (RSCS…EECV), and 283–343 (GSCS…PECI). Over 27–3901 (ACVYQDSLLA…AASLSQTGAS (3875 aa)) the chain is Extracellular. A Phosphoserine modification is found at Ser344. Residues 347–417 (GYCVYEETGE…VKGQCCPDCT (71 aa)) enclose the VWFC 6 domain. A glycan (N-linked (GlcNAc...) asparagine) is linked at Asn361. FU repeat units lie at residues 409–460 (KGQC…GFYQ), 462–505 (GSLC…GFYQ), 507–553 (RHSC…GFYN), 555–599 (QGTC…GYYA), 602–647 (TGRC…GFYS), 649–705 (HGVC…HFYL), 708–753 (TGIC…GYFH), 755–800 (EGSC…EQFL), 803–852 (VGYC…GYYA), 854–900 (RGAC…GHYL), 903–948 (NHVC…QYYL), 952–997 (TNTC…SFYQ), 999–1042 (SGLC…GYFA), and 1046–1089 (KHKC…GFSV). A glycan (N-linked (GlcNAc...) asparagine) is linked at Asn728. N-linked (GlcNAc...) asparagine glycosylation is found at Asn1093 and Asn1108. CSPG repeat units lie at residues 1102 to 1197 (TPSL…LKIS), 1217 to 1308 (APYV…LQAN), 1329 to 1438 (GLQL…FEVS), 1463 to 1559 (APKV…FSFA), 1595 to 1689 (PVFQ…ISVT), 1710 to 1810 (GPRL…FSVS), and 1833 to 1936 (PPVI…FYVS). Asn1504 carries an N-linked (GlcNAc...) asparagine glycan. N-linked (GlcNAc...) asparagine glycosylation is present at Asn1777. 2 N-linked (GlcNAc...) asparagine glycosylation sites follow: Asn1948 and Asn1978. CSPG repeat units lie at residues 1957–2057 (EPPR…FSLT), 2078–2177 (TPHL…FDVV), 2199–2291 (PPVI…FTLS), 2311–2404 (SLPV…FTVS), and 2439–2536 (TPRI…FLVK). Calx-beta domains are found at residues 2543-2646 (VSDN…VELS), 2659-2770 (AKVI…IALA), 2784-2890 (AKVL…VFLS), 2905-3007 (IAIN…VYLG), and 3025-3129 (ATIT…LVLG). Residues Asn2563, Asn2664, and Asn2682 are each glycosylated (N-linked (GlcNAc...) asparagine). Asn2908, Asn2985, Asn3070, Asn3218, Asn3676, and Asn3875 each carry an N-linked (GlcNAc...) asparagine glycan. Residues 3902–3922 (IGSALAAIMLLLLVFLVACFI) traverse the membrane as a helical segment. At 3923-4008 (NRKCQKQRKK…HNNLQDGTEV (86 aa)) the chain is on the cytoplasmic side.

It belongs to the FRAS1 family. As to expression, expressed in many adult tissues, with highest levels in kidney, pancreas and thalamus. Relatively high expression was also detected in fetal kidney and heart.

The protein localises to the cell membrane. Functionally, involved in extracellular matrix organization. Required for the regulation of epidermal-basement membrane adhesion responsible for proper organogenesis during embryonic development. Involved in brain organization and function. This is Extracellular matrix organizing protein FRAS1 from Homo sapiens (Human).